The chain runs to 487 residues: Glutamyl-tRNA(Gln) amidotransferase subunit A (487 aa).

Residues Lys-80 and Ser-155 each act as charge relay system in the active site. Ser-179 serves as the catalytic Acyl-ester intermediate.

This sequence belongs to the amidase family. GatA subfamily. Heterotrimer of A, B and C subunits.

It catalyses the reaction L-glutamyl-tRNA(Gln) + L-glutamine + ATP + H2O = L-glutaminyl-tRNA(Gln) + L-glutamate + ADP + phosphate + H(+). Allows the formation of correctly charged Gln-tRNA(Gln) through the transamidation of misacylated Glu-tRNA(Gln) in organisms which lack glutaminyl-tRNA synthetase. The reaction takes place in the presence of glutamine and ATP through an activated gamma-phospho-Glu-tRNA(Gln). The sequence is that of Glutamyl-tRNA(Gln) amidotransferase subunit A from Leptospira interrogans serogroup Icterohaemorrhagiae serovar copenhageni (strain Fiocruz L1-130).